Consider the following 435-residue polypeptide: Elongation factor 1-alpha (435 aa).

A tr-type G domain is found at 6 to 231 (KVHINLVVIG…DALEPPKRPV (226 aa)). The segment at 15-22 (GHVDSGKS) is G1. 15–22 (GHVDSGKS) is a binding site for GTP. The tract at residues 71–75 (GITID) is G2. Residues 92–95 (DAPG) are G3. Residues 92–96 (DAPGH) and 154–157 (NKMD) contribute to the GTP site. The G4 stretch occupies residues 154-157 (NKMD). Residues 195-197 (SGF) are G5.

Belongs to the TRAFAC class translation factor GTPase superfamily. Classic translation factor GTPase family. EF-Tu/EF-1A subfamily.

It is found in the cytoplasm. This protein promotes the GTP-dependent binding of aminoacyl-tRNA to the A-site of ribosomes during protein biosynthesis. The chain is Elongation factor 1-alpha from Tetrahymena pyriformis.